The following is a 171-amino-acid chain: Shikimate kinase (171 aa).

14 to 19 (GAGKST) is an ATP binding site. Ser-18 is a Mg(2+) binding site. Substrate contacts are provided by Asp-36, Arg-60, and Gly-82. Arg-120 provides a ligand contact to ATP. Arg-139 lines the substrate pocket. Residue Gln-156 coordinates ATP.

It belongs to the shikimate kinase family. In terms of assembly, monomer. Mg(2+) serves as cofactor.

It localises to the cytoplasm. It carries out the reaction shikimate + ATP = 3-phosphoshikimate + ADP + H(+). The protein operates within metabolic intermediate biosynthesis; chorismate biosynthesis; chorismate from D-erythrose 4-phosphate and phosphoenolpyruvate: step 5/7. Catalyzes the specific phosphorylation of the 3-hydroxyl group of shikimic acid using ATP as a cosubstrate. This chain is Shikimate kinase, found in Shewanella frigidimarina (strain NCIMB 400).